The sequence spans 432 residues: Glutamate-1-semialdehyde 2,1-aminomutase 2 (432 aa).

Lysine 268 is modified (N6-(pyridoxal phosphate)lysine).

It belongs to the class-III pyridoxal-phosphate-dependent aminotransferase family. HemL subfamily. Homodimer. Pyridoxal 5'-phosphate serves as cofactor.

It localises to the cytoplasm. It carries out the reaction (S)-4-amino-5-oxopentanoate = 5-aminolevulinate. It participates in porphyrin-containing compound metabolism; protoporphyrin-IX biosynthesis; 5-aminolevulinate from L-glutamyl-tRNA(Glu): step 2/2. This chain is Glutamate-1-semialdehyde 2,1-aminomutase 2, found in Listeria monocytogenes serovar 1/2a (strain ATCC BAA-679 / EGD-e).